The chain runs to 330 residues: Src kinase-associated phosphoprotein 2-B (330 aa).

The segment at 57 to 84 is disordered; the sequence is DKAEDDDQEENDGFPLPPDAVSLASDRD. A compositionally biased stretch (acidic residues) spans 59–68; sequence AEDDDQEEND. A PH domain is found at 105-208; it reads EYLKAGYLEK…WINAIMNSRG (104 aa). The tract at residues 236-261 is disordered; it reads ELPEESEKPVTETETQKATPVPVNNT. Basic and acidic residues predominate over residues 240-250; it reads ESEKPVTETET. A compositionally biased stretch (polar residues) spans 251–261; it reads QKATPVPVNNT. Residues 268-329 form the SH3 domain; sequence DYANFYRGLW…PKAYIIEMYD (62 aa).

This sequence belongs to the SKAP family. Phosphorylated on tyrosines.

It is found in the cytoplasm. Its function is as follows. May be involved in B-cell and macrophage adhesion processes. May play a role in src signaling pathway. In Xenopus laevis (African clawed frog), this protein is Src kinase-associated phosphoprotein 2-B (skap2-b).